Consider the following 390-residue polypeptide: GTPase Obg (390 aa).

The region spanning 1 to 159 (MKFVDEASIL…RELLLELMLL (159 aa)) is the Obg domain. The interval 127 to 147 (NTRFKSSVNRTPRQKTNGTPG) is disordered. Over residues 129 to 145 (RFKSSVNRTPRQKTNGT) the composition is skewed to polar residues. The OBG-type G domain occupies 160–333 (ADVGMLGMPN…LCWDVMTFII (174 aa)). GTP-binding positions include 166 to 173 (GMPNAGKS), 191 to 195 (FTTLV), 213 to 216 (DIPG), 283 to 286 (NKID), and 314 to 316 (SAA). Residues Ser173 and Thr193 each contribute to the Mg(2+) site.

Belongs to the TRAFAC class OBG-HflX-like GTPase superfamily. OBG GTPase family. As to quaternary structure, monomer. Mg(2+) serves as cofactor.

Its subcellular location is the cytoplasm. Its function is as follows. An essential GTPase which binds GTP, GDP and possibly (p)ppGpp with moderate affinity, with high nucleotide exchange rates and a fairly low GTP hydrolysis rate. Plays a role in control of the cell cycle, stress response, ribosome biogenesis and in those bacteria that undergo differentiation, in morphogenesis control. The sequence is that of GTPase Obg from Escherichia coli (strain K12 / DH10B).